Here is a 325-residue protein sequence, read N- to C-terminus: Putative ankyrin repeat protein RF_0011 (325 aa).

ANK repeat units lie at residues 63–94 (NGNT…AINM), 99–130 (RGQP…NINA), and 134–164 (CGRT…EMII).

The sequence is that of Putative ankyrin repeat protein RF_0011 from Rickettsia felis (strain ATCC VR-1525 / URRWXCal2) (Rickettsia azadi).